The primary structure comprises 357 residues: Sorbitol dehydrogenase 2 (357 aa).

Cys43 contributes to the Zn(2+) binding site. Tyr49 lines the substrate pocket. Zn(2+) is bound by residues His68 and Glu69. Residue Glu154 coordinates substrate. NAD(+) is bound by residues Asp202, Lys207, Val275–Met277, and Cys299–Arg301. Substrate is bound by residues Arg301 and Tyr302.

Belongs to the zinc-containing alcohol dehydrogenase family. In terms of assembly, homotetramer. Requires Zn(2+) as cofactor.

It carries out the reaction keto-D-fructose + NADH + H(+) = D-sorbitol + NAD(+). It catalyses the reaction xylitol + NAD(+) = D-xylulose + NADH + H(+). Polyol dehydrogenase that catalyzes the reversible NAD(+)-dependent oxidation of various sugar alcohols. Is active with D-sorbitol (D-glucitol) and xylitol as substrates, leading to the C2-oxidized product D-fructose and D-xylulose, respectively. This Saccharomyces cerevisiae (strain ATCC 204508 / S288c) (Baker's yeast) protein is Sorbitol dehydrogenase 2 (SOR2).